Here is a 537-residue protein sequence, read N- to C-terminus: 2-isopropylmalate synthase (537 aa).

The Pyruvate carboxyltransferase domain occupies 8–269 (VLIFDTTLRD…YFNGYLGRAE (262 aa)). Positions 17, 208, 210, and 244 each coordinate Mn(2+). The regulatory domain stretch occupies residues 408–537 (QLAGVQVSCG…QRAPLPAPAL (130 aa)).

The protein belongs to the alpha-IPM synthase/homocitrate synthase family. LeuA type 1 subfamily. As to quaternary structure, homodimer. Mn(2+) is required as a cofactor.

Its subcellular location is the cytoplasm. It catalyses the reaction 3-methyl-2-oxobutanoate + acetyl-CoA + H2O = (2S)-2-isopropylmalate + CoA + H(+). It participates in amino-acid biosynthesis; L-leucine biosynthesis; L-leucine from 3-methyl-2-oxobutanoate: step 1/4. In terms of biological role, catalyzes the condensation of the acetyl group of acetyl-CoA with 3-methyl-2-oxobutanoate (2-ketoisovalerate) to form 3-carboxy-3-hydroxy-4-methylpentanoate (2-isopropylmalate). The protein is 2-isopropylmalate synthase of Synechococcus sp. (strain RCC307).